The chain runs to 145 residues: D-aminoacyl-tRNA deacylase (145 aa).

The Gly-cisPro motif, important for rejection of L-amino acids signature appears at 137–138 (GP).

This sequence belongs to the DTD family. Homodimer.

The protein localises to the cytoplasm. The catalysed reaction is glycyl-tRNA(Ala) + H2O = tRNA(Ala) + glycine + H(+). It catalyses the reaction a D-aminoacyl-tRNA + H2O = a tRNA + a D-alpha-amino acid + H(+). In terms of biological role, an aminoacyl-tRNA editing enzyme that deacylates mischarged D-aminoacyl-tRNAs. Also deacylates mischarged glycyl-tRNA(Ala), protecting cells against glycine mischarging by AlaRS. Acts via tRNA-based rather than protein-based catalysis; rejects L-amino acids rather than detecting D-amino acids in the active site. By recycling D-aminoacyl-tRNA to D-amino acids and free tRNA molecules, this enzyme counteracts the toxicity associated with the formation of D-aminoacyl-tRNA entities in vivo and helps enforce protein L-homochirality. This chain is D-aminoacyl-tRNA deacylase, found in Erwinia tasmaniensis (strain DSM 17950 / CFBP 7177 / CIP 109463 / NCPPB 4357 / Et1/99).